Here is a 475-residue protein sequence, read N- to C-terminus: Chromosomal replication initiator protein DnaA (475 aa).

The tract at residues 1-73 is domain I, interacts with DnaA modulators; the sequence is MSDIEQERWS…LACWQAELPD (73 aa). The interval 73–131 is domain II; the sequence is DVHRIDLMVRSAMRCAAPAKEAPAADPRRPEHGDGRASTELKMVATAPASANHDALGGS. A domain III, AAA+ region region spans residues 132-354; it reads PLDPRLTFAS…GAINRLLAHS (223 aa). Positions 179, 181, 182, and 183 each coordinate ATP. The interval 355–475 is domain IV, binds dsDNA; that stretch reads KLNAQPVTLE…VELLKRQLQE (121 aa).

Belongs to the DnaA family. As to quaternary structure, oligomerizes as a right-handed, spiral filament on DNA at oriC.

It localises to the cytoplasm. Functionally, plays an essential role in the initiation and regulation of chromosomal replication. ATP-DnaA binds to the origin of replication (oriC) to initiate formation of the DNA replication initiation complex once per cell cycle. Binds the DnaA box (a 9 base pair repeat at the origin) and separates the double-stranded (ds)DNA. Forms a right-handed helical filament on oriC DNA; dsDNA binds to the exterior of the filament while single-stranded (ss)DNA is stabiized in the filament's interior. The ATP-DnaA-oriC complex binds and stabilizes one strand of the AT-rich DNA unwinding element (DUE), permitting loading of DNA polymerase. After initiation quickly degrades to an ADP-DnaA complex that is not apt for DNA replication. Binds acidic phospholipids. In Nitrobacter hamburgensis (strain DSM 10229 / NCIMB 13809 / X14), this protein is Chromosomal replication initiator protein DnaA.